The sequence spans 276 residues: Prohibitin 1 (276 aa).

Belongs to the prohibitin family.

In terms of biological role, required for larval metabolism or for the progression of the larva into a pupa. This chain is Prohibitin 1, found in Drosophila melanogaster (Fruit fly).